A 304-amino-acid chain; its full sequence is Ribosomal RNA small subunit methyltransferase H (304 aa).

S-adenosyl-L-methionine is bound by residues 37-39 (GGH), Asp-57, Phe-79, Asp-100, and His-107.

Belongs to the methyltransferase superfamily. RsmH family.

Its subcellular location is the cytoplasm. The enzyme catalyses cytidine(1402) in 16S rRNA + S-adenosyl-L-methionine = N(4)-methylcytidine(1402) in 16S rRNA + S-adenosyl-L-homocysteine + H(+). Its function is as follows. Specifically methylates the N4 position of cytidine in position 1402 (C1402) of 16S rRNA. This Phocaeicola vulgatus (strain ATCC 8482 / DSM 1447 / JCM 5826 / CCUG 4940 / NBRC 14291 / NCTC 11154) (Bacteroides vulgatus) protein is Ribosomal RNA small subunit methyltransferase H.